A 422-amino-acid chain; its full sequence is Probable glucuronosyltransferase Os01g0926400 (422 aa).

Over 1 to 8 (MGTRPCAG) the chain is Cytoplasmic. The chain crosses the membrane as a helical; Signal-anchor for type II membrane protein span at residues 9–29 (VASAVAAAVAVLLLAVSCFAA). Topologically, residues 30–422 (AATTTQKHGR…QGLENDLKPW (393 aa)) are lumenal. Asn-149 is a glycosylation site (N-linked (GlcNAc...) asparagine).

The protein belongs to the glycosyltransferase 47 family.

It is found in the golgi apparatus membrane. Its function is as follows. Involved in the synthesis of glucuronoxylan hemicellulose in secondary cell walls. The polypeptide is Probable glucuronosyltransferase Os01g0926400 (Oryza sativa subsp. japonica (Rice)).